Here is a 5202-residue protein sequence, read N- to C-terminus: Usherin (5202 aa).

The N-terminal stretch at 1-31 (MNCPVLSLGSGFLFQVIEMLIFAYFASISLT) is a signal peptide. Residues 32–5042 (ESRGLFPRLE…KSTEFYSELW (5011 aa)) lie on the Extracellular side of the membrane. Positions 271 to 517 (QDFRLYQVAL…AVDEITISGR (247 aa)) constitute a Laminin N-terminal domain. N-linked (GlcNAc...) asparagine glycans are attached at residues N361 and N451. Disulfide bonds link C518-C527, C520-C536, C538-C549, C552-C572, C575-C584, C577-C605, C608-C617, C620-C638, C641-C655, C643-C662, C664-C673, C676-C691, C694-C708, C696-C715, C717-C726, C729-C744, C747-C759, C749-C766, C768-C777, C780-C792, C795-C808, C797-C815, C817-C826, C829-C844, C847-C861, C849-C868, C870-C879, C882-C897, C900-C913, C902-C920, C922-C931, C934-C948, C951-C963, C953-C970, C972-C982, C985-C999, C1002-C1014, C1004-C1021, C1023-C1032, and C1035-C1050. Laminin EGF-like domains lie at 518-574 (CQCH…NCKP), 575-640 (CQCN…VCKP), 641-693 (CDCD…GCSP), 694-746 (CNCN…GCEP), 747-794 (CQCN…NCKA), 795-846 (CDCD…LCLP), 847-899 (CNCD…HCQM), 900-950 (CECD…GCLP), 951-1001 (CSCH…RCQP), and 1002-1052 (CNCH…GCSK). N-linked (GlcNAc...) asparagine glycans are attached at residues N587 and N611. N650 is a glycosylation site (N-linked (GlcNAc...) asparagine). N697 carries an N-linked (GlcNAc...) asparagine glycan. N-linked (GlcNAc...) asparagine glycans are attached at residues N839, N856, and N862. N888 carries N-linked (GlcNAc...) asparagine glycosylation. N-linked (GlcNAc...) asparagine glycosylation occurs at N944. N1011 is a glycosylation site (N-linked (GlcNAc...) asparagine). Fibronectin type-III domains are found at residues 1058–1146 (PPPR…TKPG), 1148–1244 (PEGN…APPQ), 1245–1363 (RLSP…SAPV), and 1364–1468 (FMIP…AAPA). 3 N-linked (GlcNAc...) asparagine glycosylation sites follow: N1071, N1151, and N1174. N1379, N1388, N1479, and N1635 each carry an N-linked (GlcNAc...) asparagine glycan. Laminin G-like domains lie at 1517–1709 (MKGI…WEGC) and 1714–1891 (NEGA…LDGC). Cysteines 1672 and 1709 form a disulfide. The N-linked (GlcNAc...) asparagine glycan is linked to N1779. Residues C1862 and C1891 are joined by a disulfide bond. Fibronectin type-III domains are found at residues 1869–1955 (TRGA…AAPQ), 1957–2054 (VPTP…TPQE), 2055–2144 (APQE…LPPE), 2145–2239 (HVDS…TDED), 2243–2330 (GVPA…APPE), 2331–2433 (GTVN…MPPG), 2437–2531 (GVLP…TAED), 2535–2622 (PVVP…TLPG), 2624–2722 (PEGI…TRPS), 2726–2819 (GVQP…THPT), 2820–2923 (VPQN…TLAG), 2927–3018 (RGAN…TCDG), 3022–3112 (GMLP…TPSD), and 3113–3209 (IPTP…CCEE). N-linked (GlcNAc...) asparagine glycans are attached at residues N1903, N2011, N2014, N2048, N2130, N2182, N2195, N2258, N2285, N2322, N2377, N2382, N2407, and N2413. N-linked (GlcNAc...) asparagine glycans are attached at residues N2581, N2584, N2656, N2710, N2770, and N2788. N2930, N2937, N2970, N3032, and N3099 each carry an N-linked (GlcNAc...) asparagine glycan. N-linked (GlcNAc...) asparagine glycosylation is found at N3217, N3330, N3419, and N3433. Intrachain disulfides connect C3371-C3444 and C3399-C3425. Fibronectin type-III domains lie at 3403-3497 (CPAS…TKED), 3501-3589 (GVSP…TQGV), 3592-3682 (SILP…AAPE), 3684-3770 (VWVT…TPMS), 3774-3865 (EIYP…TPEA), 3866-3963 (APMD…TLEA), 3964-4067 (PPQD…SSPS), 4068-4153 (GLRN…TDEA), 4157-4261 (SQLA…TLQA), 4262-4357 (PPEG…AAPS), 4358-4445 (EVSP…ALPE), 4446-4530 (NMDS…TSPS), 4534-4630 (GMEP…TPEI), 4636-4733 (PPPH…TGPA), 4734-4827 (PPEG…THPA), and 4828-4927 (PPSG…SFTT). Residues N3653, N3694, N3733, N3780, and N3849 are each glycosylated (N-linked (GlcNAc...) asparagine). N-linked (GlcNAc...) asparagine glycosylation is present at N3984. N-linked (GlcNAc...) asparagine glycosylation is found at N4202, N4226, N4317, and N4418. The disordered stretch occupies residues 4518 to 4541 (ILSPLVKDRTSPSAPSGMEPPKLQ). Residues N4564, N4583, N4691, N4754, and N4800 are each glycosylated (N-linked (GlcNAc...) asparagine). N4943 and N4950 each carry an N-linked (GlcNAc...) asparagine glycan. A helical transmembrane segment spans residues 5043 to 5063 (FIVLMAMLGLILLAIFLSLIL). The Cytoplasmic portion of the chain corresponds to 5064–5202 (QRKIHKEPYI…ERTTFTDTHL (139 aa)). A PDZ-binding motif is present at residues 5200 to 5202 (THL).

In terms of assembly, interacts with collagen IV and fibronectin via its laminin EGF-like domains. Interaction with collagen may be required for stable integration into the basement membrane. Interacts with NINL. Interacts with USH1C. Component of USH2 complex, composed of ADGRV1, PDZD7, USH2A and WHRN. Interacts with ADGRV1/MASS1 (via N-terminal PDZ domain). Interacts (via the cytoplasmic region) with WHRN. Interacts (via the cytoplasmic region) with PDZD7. Interacts (via the cytoplasmic region) with VEZT and MYO7A (via MyTH4-FERM domains); the interaction associates VEZT with the USH2 complex at the stereocilia base. As to expression, present in the basement membrane of many, but not all tissues. Expressed in retina, cochlea, small and large intestine, pancreas, bladder, prostate, esophagus, trachea, thymus, salivary glands, placenta, ovary, fallopian tube, uterus and testis. Absent in many other tissues such as heart, lung, liver, kidney and brain. In the retina, it is present in the basement membranes in the Bruch's layer choroid capillary basement membranes, where it localizes just beneath the retinal pigment epithelial cells (at protein level). Weakly expressed. Isoform 2 is expressed in fetal eye, cochlea and heart, and at very low level in brain, CNS, intestine, skeleton, tongue, kidney and lung. Isoform 2 is not expressed in stomach and liver. In adult tissues, isoform 2 is expressed in neural retina and testis, and at low level in brain, heart, kidney and liver. Isoform 1 displays a similar pattern of expression but is expressed at very low level in fetal cochlea.

It localises to the cell projection. The protein resides in the stereocilium membrane. The protein localises to the secreted. In terms of biological role, involved in hearing and vision as member of the USH2 complex. In the inner ear, required for the maintenance of the hair bundle ankle formation, which connects growing stereocilia in developing cochlear hair cells. In retina photoreceptors, the USH2 complex is required for the maintenance of periciliary membrane complex that seems to play a role in regulating intracellular protein transport. This chain is Usherin (USH2A), found in Homo sapiens (Human).